The chain runs to 200 residues: MSQVTDMRSNSQGLSLTDSVYERLLSERIIFLGSEVNDEIANRLCAQILLLAAEDASKDISLYINSPGGSISAGMAIYDTMVLAPCDIATYAMGMAASMGEFLLAAGTKGKRYALPHARILMHQPLGGVTGSAADIAIQAEQFAVIKKEMFRLNAEFTGQPIERIEADSDRDRWFTAAEALEYGFVDHIITRAHVNGEAQ.

Ser-98 (nucleophile) is an active-site residue. His-123 is an active-site residue.

This sequence belongs to the peptidase S14 family. In terms of assembly, fourteen ClpP subunits assemble into 2 heptameric rings which stack back to back to give a disk-like structure with a central cavity, resembling the structure of eukaryotic proteasomes.

It localises to the cytoplasm. The catalysed reaction is Hydrolysis of proteins to small peptides in the presence of ATP and magnesium. alpha-casein is the usual test substrate. In the absence of ATP, only oligopeptides shorter than five residues are hydrolyzed (such as succinyl-Leu-Tyr-|-NHMec, and Leu-Tyr-Leu-|-Tyr-Trp, in which cleavage of the -Tyr-|-Leu- and -Tyr-|-Trp bonds also occurs).. Its function is as follows. Cleaves peptides in various proteins in a process that requires ATP hydrolysis. Has a chymotrypsin-like activity. Plays a major role in the degradation of misfolded proteins. This is ATP-dependent Clp protease proteolytic subunit 1 from Mycobacterium bovis (strain ATCC BAA-935 / AF2122/97).